We begin with the raw amino-acid sequence, 185 residues long: dTTP/UTP pyrophosphatase (185 aa).

The Proton acceptor role is filled by Asp-67.

This sequence belongs to the Maf family. YhdE subfamily. A divalent metal cation serves as cofactor.

The protein resides in the cytoplasm. It catalyses the reaction dTTP + H2O = dTMP + diphosphate + H(+). The catalysed reaction is UTP + H2O = UMP + diphosphate + H(+). In terms of biological role, nucleoside triphosphate pyrophosphatase that hydrolyzes dTTP and UTP. May have a dual role in cell division arrest and in preventing the incorporation of modified nucleotides into cellular nucleic acids. The protein is dTTP/UTP pyrophosphatase of Lacticaseibacillus casei (strain BL23) (Lactobacillus casei).